A 325-amino-acid chain; its full sequence is Retinal homeobox protein Rx-B (325 aa).

The Octapeptide motif signature appears at 32-39 (HSIEAILG). The span at 75 to 87 (TEEIHPQQEHLED) shows a compositional bias: basic and acidic residues. Positions 75–136 (TEEIHPQQEH…KKKHRRNRTT (62 aa)) are disordered. Residues 99–117 (AKTSSECLSPGLSTSNSDN) are compositionally biased toward polar residues. A DNA-binding region (homeobox) is located at residues 130 to 189 (HRRNRTTFTTYQLHELERAFEKSHYPDVYSREELAMKVNLPEVRVQVWFQNRRAKWRRQE). Positions 302–315 (NSIASLRMKAKEHI) match the OAR motif. The Nuclear localization signal signature appears at 308-312 (RMKAK).

This sequence belongs to the paired homeobox family. Bicoid subfamily. Highly expressed in anterior neural plate followed by neural retina, pigmented epithelium, in pineal gland, diencephalon floor and epiphysis. At later stages, the neuroretina remains the primary site of expression. No expression in the developing lens and cornea.

It localises to the nucleus. Plays a critical role in eye formation by regulating the initial specification of retinal cells and/or their subsequent proliferation. The sequence is that of Retinal homeobox protein Rx-B (rax-b) from Xenopus laevis (African clawed frog).